Consider the following 98-residue polypeptide: Integration host factor subunit alpha (98 aa).

The disordered stretch occupies residues 49–72; that stretch reads FGNFDLRDKNQRPGRNPKTGEDIP.

It belongs to the bacterial histone-like protein family. Heterodimer of an alpha and a beta chain.

In terms of biological role, this protein is one of the two subunits of integration host factor, a specific DNA-binding protein that functions in genetic recombination as well as in transcriptional and translational control. The polypeptide is Integration host factor subunit alpha (Shewanella loihica (strain ATCC BAA-1088 / PV-4)).